We begin with the raw amino-acid sequence, 175 residues long: Probable coatomer subunit zeta-A (175 aa).

The protein belongs to the adaptor complexes small subunit family. Oligomeric complex that consists of at least the alpha, beta, beta', gamma, delta, epsilon and zeta subunits.

It is found in the cytoplasm. The protein localises to the golgi apparatus membrane. The protein resides in the cytoplasmic vesicle. It localises to the COPI-coated vesicle membrane. The coatomer is a cytosolic protein complex that binds to dilysine motifs and reversibly associates with Golgi non-clathrin-coated vesicles, which further mediate biosynthetic protein transport from the ER, via the Golgi up to the trans Golgi network. Coatomer complex is required for budding from Golgi membranes, and is essential for the retrograde Golgi-to-ER transport of dilysine-tagged proteins. The zeta subunit may be involved in regulating the coat assembly and, hence, the rate of biosynthetic protein transport due to its association-dissociation properties with the coatomer complex. This chain is Probable coatomer subunit zeta-A (copZa), found in Dictyostelium discoideum (Social amoeba).